The primary structure comprises 206 residues: Dihydrofolate reductase (206 aa).

Residues 6-204 (SLTLIVALTT…FDYEFEMWTR (199 aa)) enclose the DHFR domain. Residues Ala12 and 18-24 (GIGRSNS) each bind NADP(+). Substrate is bound at residue 32 to 37 (EISYFK). 59-61 (RKT) lines the NADP(+) pocket. Residue Arg75 coordinates substrate. NADP(+) contacts are provided by residues 81–83 (TRN) and 124–131 (GGAQLYKA).

Belongs to the dihydrofolate reductase family.

It catalyses the reaction (6S)-5,6,7,8-tetrahydrofolate + NADP(+) = 7,8-dihydrofolate + NADPH + H(+). It participates in cofactor biosynthesis; tetrahydrofolate biosynthesis; 5,6,7,8-tetrahydrofolate from 7,8-dihydrofolate: step 1/1. Its function is as follows. Key enzyme in folate metabolism. Catalyzes an essential reaction for de novo glycine and purine synthesis, and for DNA precursor synthesis. The chain is Dihydrofolate reductase from Pneumocystis carinii.